The chain runs to 269 residues: Formamidopyrimidine-DNA glycosylase (269 aa).

Pro-2 serves as the catalytic Schiff-base intermediate with DNA. Glu-3 functions as the Proton donor in the catalytic mechanism. The Proton donor; for beta-elimination activity role is filled by Lys-57. Residues His-90, Arg-109, and Lys-150 each contribute to the DNA site. The segment at 235–269 adopts an FPG-type zinc-finger fold; it reads QVYGKGGKPCPRCDNPLSEMKIGQRASVFCSECQK. Arg-259 functions as the Proton donor; for delta-elimination activity in the catalytic mechanism.

It belongs to the FPG family. Monomer. The cofactor is Zn(2+).

The enzyme catalyses Hydrolysis of DNA containing ring-opened 7-methylguanine residues, releasing 2,6-diamino-4-hydroxy-5-(N-methyl)formamidopyrimidine.. It catalyses the reaction 2'-deoxyribonucleotide-(2'-deoxyribose 5'-phosphate)-2'-deoxyribonucleotide-DNA = a 3'-end 2'-deoxyribonucleotide-(2,3-dehydro-2,3-deoxyribose 5'-phosphate)-DNA + a 5'-end 5'-phospho-2'-deoxyribonucleoside-DNA + H(+). Functionally, involved in base excision repair of DNA damaged by oxidation or by mutagenic agents. Acts as a DNA glycosylase that recognizes and removes damaged bases. Has a preference for oxidized purines, such as 7,8-dihydro-8-oxoguanine (8-oxoG). Has AP (apurinic/apyrimidinic) lyase activity and introduces nicks in the DNA strand. Cleaves the DNA backbone by beta-delta elimination to generate a single-strand break at the site of the removed base with both 3'- and 5'-phosphates. In Photobacterium profundum (strain SS9), this protein is Formamidopyrimidine-DNA glycosylase.